We begin with the raw amino-acid sequence, 334 residues long: Isocitrate/homoisocitrate dehydrogenase (334 aa).

70–72 serves as a coordination point for NADH; that stretch reads ATS. (2R,3S)-homoisocitrate is bound by residues serine 72, arginine 85, arginine 88, arginine 98, arginine 118, tyrosine 125, lysine 171, and asparagine 173. Position 173 (asparagine 173) interacts with NADH. Positions 204, 228, and 232 each coordinate Mg(2+). Residues 261 to 265 and asparagine 273 contribute to the NADH site; that span reads GSAPD.

It belongs to the isocitrate and isopropylmalate dehydrogenases family. In terms of assembly, homotetramer. Dimer of dimers. The homotetramer can transiently dissociate into homodimers. Mg(2+) serves as cofactor.

The enzyme catalyses (2R,3S)-homoisocitrate + NAD(+) = 2-oxoadipate + CO2 + NADH. It catalyses the reaction D-threo-isocitrate + NAD(+) = 2-oxoglutarate + CO2 + NADH. Its pathway is amino-acid biosynthesis; L-lysine biosynthesis via AAA pathway; L-alpha-aminoadipate from 2-oxoglutarate: step 4/5. In terms of biological role, catalyzes the NAD(+)-dependent oxidative decarboxylation of homoisocitrate to 2-oxoadipate (alpha-ketoadipate), a reaction involved in lysine biosynthesis through the alpha-aminoadipate pathway. In addition, has high activity with isocitrate, but is inactive with 3-isopropylmalate. In Thermus thermophilus (strain ATCC BAA-163 / DSM 7039 / HB27), this protein is Isocitrate/homoisocitrate dehydrogenase (hicd).